Consider the following 127-residue polypeptide: MKIVVTSIFVQDQDMALEFYTEKLGFIKKEDVPMGKFRWITLVSPDDQDGTELLLEPNEHPAAKEYQKKIFSEGLPATMFGVADIQKEYNRLKEKGVTFTTEPTKMGEVTIAVFDDTCGNLIQIVQK.

A VOC domain is found at methionine 1 to lysine 127.

Belongs to the glyoxalase I family.

This is an uncharacterized protein from Bacillus subtilis (strain 168).